The sequence spans 104 residues: Large ribosomal subunit protein uL24 (104 aa).

The protein belongs to the universal ribosomal protein uL24 family. Part of the 50S ribosomal subunit.

In terms of biological role, one of two assembly initiator proteins, it binds directly to the 5'-end of the 23S rRNA, where it nucleates assembly of the 50S subunit. Functionally, one of the proteins that surrounds the polypeptide exit tunnel on the outside of the subunit. The protein is Large ribosomal subunit protein uL24 of Pseudomonas fluorescens (strain Pf0-1).